Consider the following 393-residue polypeptide: Iripin-5 (393 aa).

A signal peptide spans 1–16 (MKTLIVLMCSLVVVWA). N198 and N245 each carry an N-linked (GlcNAc...) asparagine glycan.

It belongs to the serpin family. In terms of tissue distribution, highly expressed in female salivary gland during blood feeding. Expressed in female midgut and ovary during blood feeding.

The protein localises to the secreted. Functionally, serine protease inhibitor that modulates blood feeding of ticks on vertebrate species. Inhibits host neutrophil elastase (ELANE) and proteinase 3/myeloblastin (PRTN3). Moderately inhibits host chymase, cathepsin G (CTSG), trypsin and alpha-chymotrypsin. Decreases host neutrophil migration. Decreases nitric oxide production by host macrophages. Decreases host complement activity. The sequence is that of Iripin-5 from Ixodes ricinus (Common tick).